The chain runs to 143 residues: Large ribosomal subunit protein uL11 (143 aa).

This sequence belongs to the universal ribosomal protein uL11 family. In terms of assembly, part of the ribosomal stalk of the 50S ribosomal subunit. Interacts with L10 and the large rRNA to form the base of the stalk. L10 forms an elongated spine to which L12 dimers bind in a sequential fashion forming a multimeric L10(L12)X complex. One or more lysine residues are methylated.

Functionally, forms part of the ribosomal stalk which helps the ribosome interact with GTP-bound translation factors. This is Large ribosomal subunit protein uL11 from Phenylobacterium zucineum (strain HLK1).